The primary structure comprises 448 residues: Trk system potassium uptake protein TrkA homolog 2 (448 aa).

One can recognise an RCK N-terminal 1 domain in the interval 1–124 (MKAVVIGAGE…RAQVGVDIMI (124 aa)). Residues 7–11 (GAGEV), Glu-29, 70–71 (TG), and Arg-101 each bind NAD(+). The RCK C-terminal 1 domain maps to 144-225 (IDAEMFAGGK…MADLENVFGN (82 aa)). Positions 230 to 348 (RNRILLIGCG…FEMVGIDIAV (119 aa)) constitute an RCK N-terminal 2 domain. NAD(+) is bound at residue 232-262 (RILLIGCGIVGFYLAKIIDKDENADLKVIEY). Positions 368–448 (EALATIEGEK…AVRSVEKLFK (81 aa)) constitute an RCK C-terminal 2 domain.

In terms of biological role, part of a potassium transport system. This is Trk system potassium uptake protein TrkA homolog 2 (trkA2) from Methanosarcina mazei (strain ATCC BAA-159 / DSM 3647 / Goe1 / Go1 / JCM 11833 / OCM 88) (Methanosarcina frisia).